Reading from the N-terminus, the 119-residue chain is Large ribosomal subunit protein uL18 (119 aa).

It belongs to the universal ribosomal protein uL18 family. In terms of assembly, part of the 50S ribosomal subunit; part of the 5S rRNA/L5/L18/L25 subcomplex. Contacts the 5S and 23S rRNAs.

Functionally, this is one of the proteins that bind and probably mediate the attachment of the 5S RNA into the large ribosomal subunit, where it forms part of the central protuberance. This Clostridium beijerinckii (strain ATCC 51743 / NCIMB 8052) (Clostridium acetobutylicum) protein is Large ribosomal subunit protein uL18.